We begin with the raw amino-acid sequence, 192 residues long: Shikimate kinase (192 aa).

26-31 (ASGKSS) is an ATP binding site. Residue S30 participates in Mg(2+) binding. Residues D48, R72, and G94 each contribute to the substrate site. Position 132 (R132) interacts with ATP. Residue R151 coordinates substrate.

The protein belongs to the shikimate kinase family. In terms of assembly, monomer. Requires Mg(2+) as cofactor.

The protein resides in the cytoplasm. The enzyme catalyses shikimate + ATP = 3-phosphoshikimate + ADP + H(+). The protein operates within metabolic intermediate biosynthesis; chorismate biosynthesis; chorismate from D-erythrose 4-phosphate and phosphoenolpyruvate: step 5/7. Catalyzes the specific phosphorylation of the 3-hydroxyl group of shikimic acid using ATP as a cosubstrate. The protein is Shikimate kinase of Prochlorococcus marinus (strain MIT 9313).